Reading from the N-terminus, the 216-residue chain is Redox-sensing transcriptional repressor Rex (216 aa).

A DNA-binding region (H-T-H motif) is located at residues 16 to 55; the sequence is VYYRYLNVLLNANKHRVSSTELSEAVQVDSATIRRDFSYF. 90-95 is a binding site for NAD(+); the sequence is GVGSLG.

The protein belongs to the transcriptional regulatory Rex family. Homodimer.

The protein localises to the cytoplasm. In terms of biological role, modulates transcription in response to changes in cellular NADH/NAD(+) redox state. The chain is Redox-sensing transcriptional repressor Rex from Limosilactobacillus fermentum (strain NBRC 3956 / LMG 18251) (Lactobacillus fermentum).